Consider the following 246-residue polypeptide: tRNA1(Val) (adenine(37)-N6)-methyltransferase (246 aa).

This sequence belongs to the methyltransferase superfamily. tRNA (adenine-N(6)-)-methyltransferase family.

Its subcellular location is the cytoplasm. The catalysed reaction is adenosine(37) in tRNA1(Val) + S-adenosyl-L-methionine = N(6)-methyladenosine(37) in tRNA1(Val) + S-adenosyl-L-homocysteine + H(+). Specifically methylates the adenine in position 37 of tRNA(1)(Val) (anticodon cmo5UAC). This Shewanella halifaxensis (strain HAW-EB4) protein is tRNA1(Val) (adenine(37)-N6)-methyltransferase.